Reading from the N-terminus, the 179-residue chain is Inner membrane-spanning protein YciB (179 aa).

5 helical membrane passes run 24 to 44 (TATG…YAME), 49 to 69 (AMQK…LVLH), 76 to 96 (WKPT…LWAL), 121 to 141 (VAWI…AAYF), and 151 to 171 (LWGY…ISPH).

Belongs to the YciB family.

The protein localises to the cell inner membrane. Plays a role in cell envelope biogenesis, maintenance of cell envelope integrity and membrane homeostasis. The polypeptide is Inner membrane-spanning protein YciB (Variovorax paradoxus (strain S110)).